The chain runs to 180 residues: ATP-dependent protease subunit HslV (180 aa).

The active site involves Thr7. 3 residues coordinate Na(+): Gly165, Cys168, and Thr171.

The protein belongs to the peptidase T1B family. HslV subfamily. In terms of assembly, a double ring-shaped homohexamer of HslV is capped on each side by a ring-shaped HslU homohexamer. The assembly of the HslU/HslV complex is dependent on binding of ATP.

It is found in the cytoplasm. It carries out the reaction ATP-dependent cleavage of peptide bonds with broad specificity.. Allosterically activated by HslU binding. Protease subunit of a proteasome-like degradation complex believed to be a general protein degrading machinery. This Bacillus cereus (strain Q1) protein is ATP-dependent protease subunit HslV.